Consider the following 147-residue polypeptide: Myoglobin (147 aa).

A Globin domain is found at 2–137 (ADFEMVLKHW…VMTTIIADIE (136 aa)). Residue His-60 participates in nitrite binding. An O2-binding site is contributed by His-60. Position 89 (His-89) interacts with heme b.

Belongs to the globin family. Monomeric.

The protein resides in the cytoplasm. Its subcellular location is the sarcoplasm. It catalyses the reaction Fe(III)-heme b-[protein] + nitric oxide + H2O = Fe(II)-heme b-[protein] + nitrite + 2 H(+). It carries out the reaction H2O2 + AH2 = A + 2 H2O. Its function is as follows. Monomeric heme protein which primary function is to store oxygen and facilitate its diffusion within muscle tissues. Reversibly binds oxygen through a pentacoordinated heme iron and enables its timely and efficient release as needed during periods of heightened demand. Depending on the oxidative conditions of tissues and cells, and in addition to its ability to bind oxygen, it also has a nitrite reductase activity whereby it regulates the production of bioactive nitric oxide. Under stress conditions, like hypoxia and anoxia, it also protects cells against reactive oxygen species thanks to its pseudoperoxidase activity. The protein is Myoglobin (mb) of Makaira nigricans (Atlantic blue marlin).